The sequence spans 437 residues: GTPase Obg (437 aa).

In terms of domain architecture, Obg spans 2 to 160 (SMFLDTAKIS…RQLELELKIL (159 aa)). One can recognise an OBG-type G domain in the interval 161-338 (ADVGLVGFPS…LLEATAELLA (178 aa)). GTP is bound by residues 167-174 (GFPSVGKS), 192-196 (FTTIV), 214-217 (DLPG), 284-287 (NKMD), and 319-321 (SSL). 2 residues coordinate Mg(2+): S174 and T194. The 79-residue stretch at 359-437 (GFAETEKDFE…IGKFEFEFVD (79 aa)) folds into the OCT domain.

This sequence belongs to the TRAFAC class OBG-HflX-like GTPase superfamily. OBG GTPase family. Monomer. It depends on Mg(2+) as a cofactor.

The protein localises to the cytoplasm. Functionally, an essential GTPase which binds GTP, GDP and possibly (p)ppGpp with moderate affinity, with high nucleotide exchange rates and a fairly low GTP hydrolysis rate. Plays a role in control of the cell cycle, stress response, ribosome biogenesis and in those bacteria that undergo differentiation, in morphogenesis control. The chain is GTPase Obg from Streptococcus pyogenes serotype M4 (strain MGAS10750).